Reading from the N-terminus, the 427-residue chain is Serine--tRNA ligase (427 aa).

235-237 (TAE) lines the L-serine pocket. Residues 266 to 268 (RRE) and V282 contribute to the ATP site. Position 289 (E289) interacts with L-serine. Position 353–356 (353–356 (EASS)) interacts with ATP. S389 is an L-serine binding site.

This sequence belongs to the class-II aminoacyl-tRNA synthetase family. Type-1 seryl-tRNA synthetase subfamily. Homodimer. The tRNA molecule binds across the dimer.

Its subcellular location is the cytoplasm. It carries out the reaction tRNA(Ser) + L-serine + ATP = L-seryl-tRNA(Ser) + AMP + diphosphate + H(+). It catalyses the reaction tRNA(Sec) + L-serine + ATP = L-seryl-tRNA(Sec) + AMP + diphosphate + H(+). The protein operates within aminoacyl-tRNA biosynthesis; selenocysteinyl-tRNA(Sec) biosynthesis; L-seryl-tRNA(Sec) from L-serine and tRNA(Sec): step 1/1. Catalyzes the attachment of serine to tRNA(Ser). Is also able to aminoacylate tRNA(Sec) with serine, to form the misacylated tRNA L-seryl-tRNA(Sec), which will be further converted into selenocysteinyl-tRNA(Sec). The sequence is that of Serine--tRNA ligase from Chloroherpeton thalassium (strain ATCC 35110 / GB-78).